Consider the following 473-residue polypeptide: 3-isopropylmalate dehydratase large subunit (473 aa).

Residues Cys-355, Cys-415, and Cys-418 each coordinate [4Fe-4S] cluster. The tract at residues Pro-423–Leu-452 is disordered.

Belongs to the aconitase/IPM isomerase family. LeuC type 1 subfamily. In terms of assembly, heterodimer of LeuC and LeuD. Requires [4Fe-4S] cluster as cofactor.

The catalysed reaction is (2R,3S)-3-isopropylmalate = (2S)-2-isopropylmalate. It functions in the pathway amino-acid biosynthesis; L-leucine biosynthesis; L-leucine from 3-methyl-2-oxobutanoate: step 2/4. Catalyzes the isomerization between 2-isopropylmalate and 3-isopropylmalate, via the formation of 2-isopropylmaleate. This Corynebacterium jeikeium (strain K411) protein is 3-isopropylmalate dehydratase large subunit.